The primary structure comprises 568 residues: Type 2 DNA topoisomerase 6 subunit B (568 aa).

Residues N46, D78, 99–100 (TK), 109–116 (GQQGIGIS), and K473 contribute to the ATP site.

It belongs to the TOP6B family. As to quaternary structure, homodimer. Heterotetramer of two Top6A and two Top6B chains.

The enzyme catalyses ATP-dependent breakage, passage and rejoining of double-stranded DNA.. Relaxes both positive and negative superturns and exhibits a strong decatenase activity. The chain is Type 2 DNA topoisomerase 6 subunit B from Pyrococcus furiosus (strain ATCC 43587 / DSM 3638 / JCM 8422 / Vc1).